A 1255-amino-acid chain; its full sequence is Stress response protein NST1 (1255 aa).

Over residues M1 to P19 the composition is skewed to pro residues. Disordered stretches follow at residues M1–E214, N285–L379, R470–E525, E563–G898, and H956–G1080. The span at P50–P61 shows a compositional bias: low complexity. Residues N76–A86 are compositionally biased toward basic residues. Residues A87–Q96 show a composition bias toward low complexity. Positions A118–P127 are enriched in acidic residues. Residues K151–N162 show a composition bias toward basic residues. Residues P187 to Q196 show a composition bias toward pro residues. Residues M201–E214 are compositionally biased toward basic and acidic residues. Residues E330–S376 are compositionally biased toward acidic residues. The span at R470 to V481 shows a compositional bias: basic and acidic residues. The segment covering P488–T518 has biased composition (acidic residues). Residues R547–A745 adopt a coiled-coil conformation. Composition is skewed to basic and acidic residues over residues K590–K630 and Q637–A745. Pro residues predominate over residues P770–V780. Residues Q811–N835 are compositionally biased toward low complexity. Composition is skewed to polar residues over residues Q865 to P877 and R983 to S1004. The span at G1067–G1080 shows a compositional bias: pro residues.

It belongs to the NST1 family.

The protein resides in the cytoplasm. May act as a negative regulator of salt tolerance. The sequence is that of Stress response protein NST1 (NST1) from Chaetomium globosum (strain ATCC 6205 / CBS 148.51 / DSM 1962 / NBRC 6347 / NRRL 1970) (Soil fungus).